We begin with the raw amino-acid sequence, 478 residues long: Calcitonin receptor (478 aa).

The N-terminal stretch at 1-22 is a signal peptide; sequence MRFTFTRQFLAFFILISNPASI. Over 23-146 the chain is Extracellular; that stretch reads LPRSENLTFP…FTPEKLQNAY (124 aa). N-linked (GlcNAc...) asparagine glycosylation is found at Asn28, Asn73, Asn125, and Asn130. 3 disulfide bridges follow: Cys55/Cys81, Cys72/Cys112, and Cys95/Cys134. The chain crosses the membrane as a helical span at residues 147 to 169; that stretch reads VLYYLAIVGHSMSIITLVVSLGI. At 170–181 the chain is on the cytoplasmic side; it reads FVYFRSLGCQRV. The helical transmembrane segment at 182–202 threads the bilayer; that stretch reads TLHKNMFLTYILNSMIIIIHL. The Extracellular segment spans residues 203–219; the sequence is VEVVPNGELVRKDPVSC. Cys219 and Cys289 are joined by a disulfide. The chain crosses the membrane as a helical span at residues 220-242; that stretch reads KILHFFHQYMMACNYFWMLCEGI. Residues 243-259 lie on the Cytoplasmic side of the membrane; the sequence is YLHTLIVVSVFNEAKHL. Residues 260–280 form a helical membrane-spanning segment; sequence RWYYLLGWGFPLVPTTIHAIT. The Extracellular segment spans residues 281-296; that stretch reads RALYFNDNCWISVDTH. A helical membrane pass occupies residues 297 to 320; it reads LLYIIHGPVMVALVVNFFFLLNIV. Topologically, residues 321–340 are cytoplasmic; that stretch reads RVLVTKMRETHEAESYMYLK. A helical transmembrane segment spans residues 341–359; the sequence is AVKATMILVPLLGIQFVVF. Over 360–367 the chain is Extracellular; that stretch reads PWRPSNKV. A helical membrane pass occupies residues 368–394; the sequence is LGKIYDYFMHSLIHFQGFFVATIYCFC. Topologically, residues 395 to 478 are cytoplasmic; it reads NNEVQTTLKR…LNIIEKESSA (84 aa).

It belongs to the G-protein coupled receptor 2 family. As to quaternary structure, heterodimer of CALCR and RAMP1, RAMP2 or RAMP3; the receptor complexes function as AMYR1, AMYR2 and AMYR3 receptors, respectively, and respond to amylin/IAPP, calcitonin/CT and CGRP1 ligands. Interacts with GPRASP2.

Its subcellular location is the cell membrane. G protein-coupled receptor activated by ligand peptides amylin (IAPP), calcitonin (CT/CALCA) and calcitonin gene-related peptide type 1 (CGRP1/CALCA). CALCR interacts with receptor-activity-modifying proteins RAMP1, 2 and 3 to form receptor complexes AMYR1, 2 and 3, respectively. IAPP, CT and CGRP1 activate CALCR and AMYRs with distinct modes of receptor activation resulting in specific phenotypes. Ligand binding causes a conformation change that triggers signaling via guanine nucleotide-binding proteins (G proteins) and modulates the activity of downstream effectors. Activates cAMP-dependent pathway. This is Calcitonin receptor from Cavia porcellus (Guinea pig).